Consider the following 97-residue polypeptide: Non-pathogenic pore-forming peptide amoebapore A (97 aa).

The signal sequence occupies residues 1-20 (MKAIVFVLIFAVAFAVTLRQ). Residues 21–97 (GPIVCNLCTG…NAICAKIHAC (77 aa)) enclose the Saposin B-type domain. Cystine bridges form between cysteine 25–cysteine 97, cysteine 28–cysteine 91, and cysteine 55–cysteine 66.

In terms of assembly, monomer. Homodimer. Hexamer; formed during insertion in the membrane.

It localises to the cytoplasmic granule. In terms of biological role, forms pores in the cell membrane of host cells. Implicated in the cytolytic activity of the parasite. Pore forming activity is lower compared to the activity of ameobapore A from the pathogenic strain HM-1:IMSS. In Entamoeba histolytica, this protein is Non-pathogenic pore-forming peptide amoebapore A.